The sequence spans 298 residues: GTPase Era (298 aa).

The region spanning 7–174 (RSGFVSIIGR…VELVRKALPQ (168 aa)) is the Era-type G domain. A G1 region spans residues 15-22 (GRPNVGKS). 15–22 (GRPNVGKS) is a GTP binding site. The segment at 41-45 (QTTRN) is G2. The tract at residues 62–65 (DTPG) is G3. Residues 62 to 66 (DTPGI) and 124 to 127 (NKVD) contribute to the GTP site. The interval 124–127 (NKVD) is G4. The G5 stretch occupies residues 153–155 (ISA). Residues 205–283 (TRDEVPYATA…FLELFVRVRK (79 aa)) form the KH type-2 domain.

Belongs to the TRAFAC class TrmE-Era-EngA-EngB-Septin-like GTPase superfamily. Era GTPase family. Monomer.

It is found in the cytoplasm. The protein resides in the cell inner membrane. Its function is as follows. An essential GTPase that binds both GDP and GTP, with rapid nucleotide exchange. Plays a role in 16S rRNA processing and 30S ribosomal subunit biogenesis and possibly also in cell cycle regulation and energy metabolism. The chain is GTPase Era from Geobacter metallireducens (strain ATCC 53774 / DSM 7210 / GS-15).